The chain runs to 175 residues: MQLTNRSKVVVDKKMTFMERIYIPSIVSGMMITLSHLFKKKATIQYPEVQREFAFVYRGKHILKRDEQGRENCTACGLCAVSCPAEAITIIADERKKGEEHLYKEEKYASLYEINMLRCIFCGLCEEACPKDAVYLTEELVPAQYNRKDFIYGKDKLVQPLGTSAHPKTYKPYKK.

2 consecutive 4Fe-4S ferredoxin-type domains span residues 64–93 (KRDE…IIAD) and 110–139 (SLYE…LTEE). The [4Fe-4S] cluster site is built by cysteine 73, cysteine 76, cysteine 79, cysteine 83, cysteine 119, cysteine 122, cysteine 125, and cysteine 129.

The protein belongs to the complex I 23 kDa subunit family. As to quaternary structure, NDH-1 is composed of 14 different subunits. Subunits NuoA, H, J, K, L, M, N constitute the membrane sector of the complex. The cofactor is [4Fe-4S] cluster.

Its subcellular location is the cell inner membrane. The enzyme catalyses a quinone + NADH + 5 H(+)(in) = a quinol + NAD(+) + 4 H(+)(out). Its function is as follows. NDH-1 shuttles electrons from NADH, via FMN and iron-sulfur (Fe-S) centers, to quinones in the respiratory chain. The immediate electron acceptor for the enzyme in this species is believed to be ubiquinone. Couples the redox reaction to proton translocation (for every two electrons transferred, four hydrogen ions are translocated across the cytoplasmic membrane), and thus conserves the redox energy in a proton gradient. The protein is NADH-quinone oxidoreductase subunit I of Cytophaga hutchinsonii (strain ATCC 33406 / DSM 1761 / CIP 103989 / NBRC 15051 / NCIMB 9469 / D465).